A 66-amino-acid polypeptide reads, in one-letter code: Alpha-conotoxin RegIIA (66 aa).

The signal sequence occupies residues 1 to 21 (MGMRMMFTVFLLVVLTTTVVS). Residues 22–49 (STSVRASDGRNAAADNRASDLIAQIVRR) constitute a propeptide that is removed on maturation. 2 disulfides stabilise this stretch: C51/C57 and C52/C65. The tract at residues 53–55 (SHP) is ser-Xaa-Pro motif, crucial for potent interaction with nAChR. A Cysteine amide modification is found at C65.

This sequence belongs to the conotoxin A superfamily. Expressed by the venom duct.

It is found in the secreted. In terms of biological role, alpha-conotoxins act on postsynaptic membranes, they bind to the nicotinic acetylcholine receptors (nAChR) and thus inhibit them. This toxin potently inhibits alpha-3 containing subunit nAChR. It inhibits alpha-3-beta-2/CHRNA3-CHRNB2 (IC(50)=10.7-33 nM (rat)/132.4-704.1 nM (human)) and alpha-3-beta-4/CHRNA3-CHRNB4 (IC(50)=47.3-97 nM (rat)/52.1 nM (human)). It also inhibits alpha-7/CHRNA7 nAChR with IC(50)=103-210 nM (human)/41-61.2 nM (rat) nAChRs. It is more potent on alpha-3-beta-2 receptors in human than in rat, due to a variation (Pro vs Gln) in alpha-3 subunit in these orthologs. Conversely, does not show species-specific differences in sensitivity at the alpha-3-beta-4 receptor. The protein is Alpha-conotoxin RegIIA of Conus regius (Crown cone).